The sequence spans 99 residues: Plastocyanin (99 aa).

The 99-residue stretch at 1-99 (IEIKLGGDDG…AGMVGKVTVQ (99 aa)) folds into the Plastocyanin-like domain. Cu cation-binding residues include H37, C84, H87, and M92.

It belongs to the plastocyanin family. Requires Cu(2+) as cofactor.

The protein resides in the plastid. The protein localises to the chloroplast thylakoid membrane. Its function is as follows. Participates in electron transfer between P700 and the cytochrome b6-f complex in photosystem I. The polypeptide is Plastocyanin (PETE) (Rumex obtusifolius (Bitter dock)).